Consider the following 107-residue polypeptide: Urease subunit beta (107 aa).

It belongs to the urease beta subunit family. As to quaternary structure, heterotrimer of UreA (gamma), UreB (beta) and UreC (alpha) subunits. Three heterotrimers associate to form the active enzyme.

The protein localises to the cytoplasm. It carries out the reaction urea + 2 H2O + H(+) = hydrogencarbonate + 2 NH4(+). It participates in nitrogen metabolism; urea degradation; CO(2) and NH(3) from urea (urease route): step 1/1. This is Urease subunit beta from Janthinobacterium sp. (strain Marseille) (Minibacterium massiliensis).